The chain runs to 435 residues: 4-hydroxy-3-methylbut-2-en-1-yl diphosphate synthase (flavodoxin) (435 aa).

Residues 1 to 15 (MTDVDLRARPQEGMK) are compositionally biased toward basic and acidic residues. The disordered stretch occupies residues 1 to 24 (MTDVDLRARPQEGMKEIPAGPKGR). Positions 316, 319, 362, and 369 each coordinate [4Fe-4S] cluster.

This sequence belongs to the IspG family. Requires [4Fe-4S] cluster as cofactor.

It catalyses the reaction (2E)-4-hydroxy-3-methylbut-2-enyl diphosphate + oxidized [flavodoxin] + H2O + 2 H(+) = 2-C-methyl-D-erythritol 2,4-cyclic diphosphate + reduced [flavodoxin]. It participates in isoprenoid biosynthesis; isopentenyl diphosphate biosynthesis via DXP pathway; isopentenyl diphosphate from 1-deoxy-D-xylulose 5-phosphate: step 5/6. Its function is as follows. Converts 2C-methyl-D-erythritol 2,4-cyclodiphosphate (ME-2,4cPP) into 1-hydroxy-2-methyl-2-(E)-butenyl 4-diphosphate. This chain is 4-hydroxy-3-methylbut-2-en-1-yl diphosphate synthase (flavodoxin), found in Afipia carboxidovorans (strain ATCC 49405 / DSM 1227 / KCTC 32145 / OM5) (Oligotropha carboxidovorans).